We begin with the raw amino-acid sequence, 554 residues long: 2-succinyl-5-enolpyruvyl-6-hydroxy-3-cyclohexene-1-carboxylate synthase (554 aa).

It belongs to the TPP enzyme family. MenD subfamily. In terms of assembly, homodimer. It depends on Mg(2+) as a cofactor. The cofactor is Mn(2+). Thiamine diphosphate serves as cofactor.

The enzyme catalyses isochorismate + 2-oxoglutarate + H(+) = 5-enolpyruvoyl-6-hydroxy-2-succinyl-cyclohex-3-ene-1-carboxylate + CO2. Its pathway is quinol/quinone metabolism; 1,4-dihydroxy-2-naphthoate biosynthesis; 1,4-dihydroxy-2-naphthoate from chorismate: step 2/7. It functions in the pathway quinol/quinone metabolism; menaquinone biosynthesis. Functionally, catalyzes the thiamine diphosphate-dependent decarboxylation of 2-oxoglutarate and the subsequent addition of the resulting succinic semialdehyde-thiamine pyrophosphate anion to isochorismate to yield 2-succinyl-5-enolpyruvyl-6-hydroxy-3-cyclohexene-1-carboxylate (SEPHCHC). The polypeptide is 2-succinyl-5-enolpyruvyl-6-hydroxy-3-cyclohexene-1-carboxylate synthase (Mycobacterium tuberculosis (strain ATCC 25177 / H37Ra)).